We begin with the raw amino-acid sequence, 668 residues long: MHANELEILELTQQLNLHNYHYYVDDNPTIPDVEYDRLLKRLIELETQSPEFAKADSPTQRVGGEALAKFEQITHLKPMLSLDNVFDETEFNGFHSRITDKVGTALSYCCEPKLDGLAVSIVYRDGVFERAATRGDGQTGENITENVRTIKSIPLKLRGDNFPPLVEVRGEVIMPHKAFNALNERARAKGEKLFVNPRNAAAGSLRQLDSKITASRALGFYAYALGVVEPESWELADSHYGQLEQLRSWGVPVSQEVKVCDSVTEVMDYYNDIQQRRSSLDFEIDGVVLKVNQIAHQLSLGFVAKAPRWATAFKFPAQEEMTLLEGVDFQVGRTGAVTPVARLKPVFVGGVTVSNATLHNADEIARLGVKVGDTIIIRRAGDVIPQIVAIVADKRPDDAQDIVFPERCPVCDSEVERIEGEAVARCSGGLFCEAQRKEAIKHFASRKALDIDGMGDKVVEQLIDKELVESPADLFKLTASAMTMLERMGMKSATKLVAAIEVAKETTFARFLYALGIREVGEATAANLAAYFKTLDALKGASAEEFIKVDDVGAIVAAHLAHFLAQPHNLEVIDKLIAVGVSWPAIEEVAEEDLSLKGQTWVLTGTLTQLNRNDAKAQLQALGAKVAGSVSKNTDCLVAGAAAGSKLTKAQELGVKVIDEEALIAILS.

NAD(+) contacts are provided by residues 32 to 36 (DVEYD), 81 to 82 (SL), and Glu111. Lys113 serves as the catalytic N6-AMP-lysine intermediate. NAD(+) is bound by residues Arg134, Glu171, Lys290, and Lys314. Cys408, Cys411, Cys426, and Cys432 together coordinate Zn(2+). The 78-residue stretch at 591 to 668 (EEDLSLKGQT…DEEALIAILS (78 aa)) folds into the BRCT domain.

This sequence belongs to the NAD-dependent DNA ligase family. LigA subfamily. Requires Mg(2+) as cofactor. Mn(2+) is required as a cofactor.

The enzyme catalyses NAD(+) + (deoxyribonucleotide)n-3'-hydroxyl + 5'-phospho-(deoxyribonucleotide)m = (deoxyribonucleotide)n+m + AMP + beta-nicotinamide D-nucleotide.. In terms of biological role, DNA ligase that catalyzes the formation of phosphodiester linkages between 5'-phosphoryl and 3'-hydroxyl groups in double-stranded DNA using NAD as a coenzyme and as the energy source for the reaction. It is essential for DNA replication and repair of damaged DNA. This Shewanella piezotolerans (strain WP3 / JCM 13877) protein is DNA ligase.